Here is a 528-residue protein sequence, read N- to C-terminus: Abrin-a (528 aa).

Gln-1 is subject to Pyrrolidone carboxylic acid. Glu-164 is a catalytic residue. 3 disulfide bridges follow: Cys-247-Cys-269, Cys-286-Cys-305, and Cys-329-Cys-346. The Ricin B-type lectin 1 domain occupies Tyr-273 to Gly-400. Residues Asp-283–Ser-325 form a 1-alpha repeat. The 1-beta repeat unit spans residues Asn-326–Asn-366. N-linked (GlcNAc...) asparagine glycans are attached at residues Asn-361 and Asn-401. A 1-gamma repeat occupies Ser-369–Asn-401. Residues Thr-403–Leu-527 form the Ricin B-type lectin 2 domain. Residues Ser-414–Ser-449 form a 2-alpha repeat. Disulfide bonds link Cys-417–Cys-430 and Cys-456–Cys-473. A 2-beta repeat occupies Thr-453–Ser-492. A 2-gamma repeat occupies Asp-495 to Phe-528.

It in the N-terminal section; belongs to the ribosome-inactivating protein family. Type 2 RIP subfamily. As to quaternary structure, disulfide-linked dimer of A and B chains.

It carries out the reaction Endohydrolysis of the N-glycosidic bond at one specific adenosine on the 28S rRNA.. Its function is as follows. The A chain is responsible for inhibiting protein synthesis through the catalytic inactivation of 60S ribosomal subunits by removing adenine from position 4,324 of 28S rRNA. Abrin-a is more toxic than ricin. Functionally, the B chain is a galactose-specific lectin that facilitates the binding of abrin to the cell membrane that precedes endocytosis. The chain is Abrin-a from Abrus precatorius (Indian licorice).